Here is a 173-residue protein sequence, read N- to C-terminus: Ribosome maturation factor RimM (173 aa).

In terms of domain architecture, PRC barrel spans Glu-95–Phe-173.

The protein belongs to the RimM family. As to quaternary structure, binds ribosomal protein uS19.

The protein resides in the cytoplasm. An accessory protein needed during the final step in the assembly of 30S ribosomal subunit, possibly for assembly of the head region. Essential for efficient processing of 16S rRNA. May be needed both before and after RbfA during the maturation of 16S rRNA. It has affinity for free ribosomal 30S subunits but not for 70S ribosomes. This chain is Ribosome maturation factor RimM, found in Hahella chejuensis (strain KCTC 2396).